We begin with the raw amino-acid sequence, 291 residues long: Glycine--tRNA ligase alpha subunit (291 aa).

Belongs to the class-II aminoacyl-tRNA synthetase family. In terms of assembly, tetramer of two alpha and two beta subunits.

The protein resides in the cytoplasm. The catalysed reaction is tRNA(Gly) + glycine + ATP = glycyl-tRNA(Gly) + AMP + diphosphate. In Nitratidesulfovibrio vulgaris (strain DSM 19637 / Miyazaki F) (Desulfovibrio vulgaris), this protein is Glycine--tRNA ligase alpha subunit.